The chain runs to 291 residues: Protease HtpX (291 aa).

2 helical membrane passes run 4–24 and 32–52; these read IILF…ILSF and ISGL…ISLL. His-139 provides a ligand contact to Zn(2+). The active site involves Glu-140. Zn(2+) is bound at residue His-143. 2 helical membrane passes run 158–178 and 192–212; these read IVNT…SSIL and WVYI…ASII. A Zn(2+)-binding site is contributed by Glu-221.

Belongs to the peptidase M48B family. It depends on Zn(2+) as a cofactor.

It is found in the cell membrane. The sequence is that of Protease HtpX from Buchnera aphidicola subsp. Baizongia pistaciae (strain Bp).